Here is a 511-residue protein sequence, read N- to C-terminus: GMP synthase [glutamine-hydrolyzing] (511 aa).

Residues 5–195 (IVIVLDFGGQ…LFNICGCKGD (191 aa)) enclose the Glutamine amidotransferase type-1 domain. The active-site Nucleophile is C82. Active-site residues include H169 and E171. Residues 196 to 386 (WKTSSFIEER…LGIPEKIVKR (191 aa)) enclose the GMPS ATP-PPase domain. 223–229 (SGGVDSS) serves as a coordination point for ATP.

In terms of assembly, homodimer.

It carries out the reaction XMP + L-glutamine + ATP + H2O = GMP + L-glutamate + AMP + diphosphate + 2 H(+). The protein operates within purine metabolism; GMP biosynthesis; GMP from XMP (L-Gln route): step 1/1. Its function is as follows. Catalyzes the synthesis of GMP from XMP. This Caldicellulosiruptor saccharolyticus (strain ATCC 43494 / DSM 8903 / Tp8T 6331) protein is GMP synthase [glutamine-hydrolyzing].